Reading from the N-terminus, the 1331-residue chain is Serine/threonine-protein kinase SSK22 (1331 aa).

Positions 1034-1310 (WQKRSFIGGG…AVELLIDPWM (277 aa)) constitute a Protein kinase domain. ATP is bound by residues 1040–1048 (IGGGTFGQV) and lysine 1063. The active-site Proton acceptor is aspartate 1158.

It belongs to the protein kinase superfamily. STE Ser/Thr protein kinase family. MAP kinase kinase kinase subfamily. As to quaternary structure, interacts with by SSK1.

It catalyses the reaction L-seryl-[protein] + ATP = O-phospho-L-seryl-[protein] + ADP + H(+). It carries out the reaction L-threonyl-[protein] + ATP = O-phospho-L-threonyl-[protein] + ADP + H(+). Functionally, kinase involved in a signal transduction pathway that is activated by changes in the osmolarity of the extracellular environment. Activates the PBS2 MAP kinase kinase by phosphorylation. The sequence is that of Serine/threonine-protein kinase SSK22 (SSK22) from Saccharomyces cerevisiae (strain ATCC 204508 / S288c) (Baker's yeast).